The chain runs to 190 residues: Cathelicidin-3 (190 aa).

Residues 1 to 29 (METQMASPSLGRCSLWLLLLGLLLPSASA) form the signal peptide. Q30 carries the pyrrolidone carboxylic acid modification. The propeptide occupies 30–130 (QALSYREAVL…DLNCNELQSV (101 aa)). Cystine bridges form between C85–C96 and C107–C124. Residues 133–151 (LRPRRPRLPRPRPRPRPRP) show a composition bias toward basic residues. A disordered region spans residues 133–190 (LRPRRPRLPRPRPRPRPRPRSLPLPRPQPRRIPRPILLPWRPPRPIPRPQPQPIPRWL). Residues 172–190 (WRPPRPIPRPQPQPIPRWL) show a composition bias toward pro residues.

This sequence belongs to the cathelicidin family.

The protein localises to the secreted. Its function is as follows. Exerts, in vitro, a potent antimicrobial activity. Probably due to an impairment of the function of the respiratory chain and of energy-dependent activities in the inner membrane of susceptible microorganisms. This chain is Cathelicidin-3 (CATHL3), found in Ovis aries (Sheep).